The sequence spans 255 residues: 5'-nucleotidase SurE (255 aa).

A divalent metal cation contacts are provided by aspartate 8, aspartate 9, serine 40, and asparagine 93.

It belongs to the SurE nucleotidase family. The cofactor is a divalent metal cation.

The protein localises to the cytoplasm. The enzyme catalyses a ribonucleoside 5'-phosphate + H2O = a ribonucleoside + phosphate. Its function is as follows. Nucleotidase that shows phosphatase activity on nucleoside 5'-monophosphates. This chain is 5'-nucleotidase SurE, found in Rhodopseudomonas palustris (strain BisB5).